The primary structure comprises 501 residues: tRNA (guanine(37)-N(1))-methyltransferase (501 aa).

S-adenosyl-L-methionine is bound by residues H282, D320–L321, D348–G349, and N380. The segment at L474–S501 is disordered.

The protein belongs to the class I-like SAM-binding methyltransferase superfamily. TRM5/TYW2 family. Monomer.

It localises to the mitochondrion matrix. The protein localises to the nucleus. The protein resides in the cytoplasm. The enzyme catalyses guanosine(37) in tRNA + S-adenosyl-L-methionine = N(1)-methylguanosine(37) in tRNA + S-adenosyl-L-homocysteine + H(+). In terms of biological role, involved in mitochondrial tRNA methylation. Specifically methylates the N1 position of guanosine-37 in various tRNAs. Methylation is not dependent on the nature of the nucleoside 5' of the target nucleoside. This is the first step in the biosynthesis of wybutosine (yW), a modified base adjacent to the anticodon of tRNAs and required for accurate decoding. The sequence is that of tRNA (guanine(37)-N(1))-methyltransferase (Trmt5) from Mus musculus (Mouse).